Reading from the N-terminus, the 183-residue chain is Adenine phosphoribosyltransferase (183 aa).

This sequence belongs to the purine/pyrimidine phosphoribosyltransferase family. As to quaternary structure, homodimer.

The protein resides in the cytoplasm. It catalyses the reaction AMP + diphosphate = 5-phospho-alpha-D-ribose 1-diphosphate + adenine. It functions in the pathway purine metabolism; AMP biosynthesis via salvage pathway; AMP from adenine: step 1/1. Functionally, catalyzes a salvage reaction resulting in the formation of AMP, that is energically less costly than de novo synthesis. The sequence is that of Adenine phosphoribosyltransferase from Shewanella halifaxensis (strain HAW-EB4).